We begin with the raw amino-acid sequence, 325 residues long: Phospho-N-acetylmuramoyl-pentapeptide-transferase (325 aa).

Transmembrane regions (helical) follow at residues Leu-3 to Ile-23, Gly-48 to Val-68, Ala-79 to Ile-99, Leu-106 to Ala-126, Ile-136 to Ile-156, Gly-174 to Thr-194, Leu-199 to Tyr-219, Val-223 to Met-243, Leu-246 to Leu-266, and Ile-298 to Ile-318.

It belongs to the glycosyltransferase 4 family. MraY subfamily. Requires Mg(2+) as cofactor.

It localises to the cell membrane. The catalysed reaction is UDP-N-acetyl-alpha-D-muramoyl-L-alanyl-gamma-D-glutamyl-meso-2,6-diaminopimeloyl-D-alanyl-D-alanine + di-trans,octa-cis-undecaprenyl phosphate = di-trans,octa-cis-undecaprenyl diphospho-N-acetyl-alpha-D-muramoyl-L-alanyl-D-glutamyl-meso-2,6-diaminopimeloyl-D-alanyl-D-alanine + UMP. Its pathway is cell wall biogenesis; peptidoglycan biosynthesis. Its function is as follows. Catalyzes the initial step of the lipid cycle reactions in the biosynthesis of the cell wall peptidoglycan: transfers peptidoglycan precursor phospho-MurNAc-pentapeptide from UDP-MurNAc-pentapeptide onto the lipid carrier undecaprenyl phosphate, yielding undecaprenyl-pyrophosphoryl-MurNAc-pentapeptide, known as lipid I. The polypeptide is Phospho-N-acetylmuramoyl-pentapeptide-transferase (Clostridium novyi (strain NT)).